Here is a 313-residue protein sequence, read N- to C-terminus: Putative S-adenosyl-L-methionine-dependent methyltransferase MUL_0706 (313 aa).

S-adenosyl-L-methionine is bound by residues Asp132 and 161 to 162 (DL).

This sequence belongs to the UPF0677 family.

Its function is as follows. Exhibits S-adenosyl-L-methionine-dependent methyltransferase activity. In Mycobacterium ulcerans (strain Agy99), this protein is Putative S-adenosyl-L-methionine-dependent methyltransferase MUL_0706.